A 262-amino-acid polypeptide reads, in one-letter code: Chondroitin proteoglycan 3 (262 aa).

A signal peptide spans 1–17; that stretch reads MRSSFIFALLLIGAALA. Positions 37–68 are disordered; the sequence is FSGEASGEASGEASGEFSGEGSGEGSGELSPE. Low complexity predominate over residues 39 to 53; the sequence is GEASGEASGEASGEF. Residues asparagine 140, asparagine 148, and asparagine 224 are each glycosylated (N-linked (GlcNAc...) asparagine).

The polypeptide is Chondroitin proteoglycan 3 (cpg-3) (Caenorhabditis briggsae).